Here is a 445-residue protein sequence, read N- to C-terminus: Tryptamine benzoyltransferase 1 (445 aa).

Residues H150 and D382 each act as proton acceptor in the active site.

It belongs to the plant acyltransferase family.

In terms of biological role, hydroxycinnamoyl transferase that catalyzes the transfer of an acyl from benzoyl-CoA to tryptamine, to produce benzoyl tryptamine. Serotonin and tyramine serve as acyl acceptors in vitro. Can use p-coumaroyl-CoA, and to a lesser extent caffeoyl-CoA, as acyl donors. In Oryza sativa subsp. japonica (Rice), this protein is Tryptamine benzoyltransferase 1.